Consider the following 1653-residue polypeptide: Clathrin heavy chain (1653 aa).

Positions Met1–Tyr483 are globular terminal domain. WD40-like repeat stretches follow at residues Phe23 to Gly66, Gly67 to Pro107, Val108 to Asn152, Asn153 to Asp198, Gly199 to Thr263, Asn264 to Glu307, and Ser308 to Ser336. Residues Glu453–Asp469 form a binding site for the uncoating ATPase, involved in lattice disassembly region. The segment at Leu484 to Arg527 is flexible linker. The interval Ser528–Phe1653 is heavy chain arm. 7 CHCR repeats span residues Asn543–Val689, Ala692–Phe834, Leu839–Asp978, Ile985–Ala1130, Tyr1134–Ala1275, Leu1280–Val1426, and Leu1429–Phe1572. Lys1107 is covalently cross-linked (Glycyl lysine isopeptide (Lys-Gly) (interchain with G-Cter in ubiquitin)). Residues Ala1219–Ala1528 are involved in binding clathrin light chain.

This sequence belongs to the clathrin heavy chain family. In terms of assembly, clathrin triskelions, composed of 3 heavy chains and 3 light chains, are the basic subunits of the clathrin coat. Interacts with the auxilin-like clathrin uncoating factor SWA2. Interacts with INP53.

The protein resides in the cytoplasmic vesicle membrane. Its subcellular location is the membrane. The protein localises to the coated pit. Its function is as follows. Clathrin is the major protein of the polyhedral coat of coated pits and vesicles. In yeast, it is involved in the retention of proteins in an intracellular membrane compartment, presumably the trans-Golgi. The chain is Clathrin heavy chain (CHC1) from Saccharomyces cerevisiae (strain ATCC 204508 / S288c) (Baker's yeast).